We begin with the raw amino-acid sequence, 256 residues long: MCLLIDAGNSRIKWALADTARHFVTSGAFEHASDAPDWSTLPVPRGAWISNVAGDAAAARIDALIEARWPALPRTVVRASAAQCGVTNGYAEPARLGSDRWAGLIGAHAAFADEHLLIATFGTATTLEALRADGHFAGGLIAPGWALMMRSLGMHTAQLPTVSIDAATNLLDELAENDAHAPFAIDTPHALSAGCLQAQAGLIERAWRDLEKAWQAPVRLVLSGGAADAIVRALTVPHTRHDTLVLTGLALIAHSA.

An ATP-binding site is contributed by 6–13 (DAGNSRIK). Substrate contacts are provided by residues tyrosine 90 and 97–100 (GSDR). Aspartate 99 serves as the catalytic Proton acceptor. Position 123 (threonine 123) interacts with ATP. Threonine 187 contributes to the substrate binding site.

It belongs to the type III pantothenate kinase family. Homodimer. NH4(+) is required as a cofactor. Requires K(+) as cofactor.

The protein resides in the cytoplasm. It catalyses the reaction (R)-pantothenate + ATP = (R)-4'-phosphopantothenate + ADP + H(+). The protein operates within cofactor biosynthesis; coenzyme A biosynthesis; CoA from (R)-pantothenate: step 1/5. In terms of biological role, catalyzes the phosphorylation of pantothenate (Pan), the first step in CoA biosynthesis. This Burkholderia mallei (strain ATCC 23344) protein is Type III pantothenate kinase.